A 380-amino-acid chain; its full sequence is Cytochrome b (380 aa).

The next 4 membrane-spanning stretches (helical) occupy residues 34 to 54, 78 to 99, 114 to 134, and 179 to 199; these read FGSL…LLAM, WLIR…YLHI, WNIG…GYVL, and LFAL…VHLT. Heme b is bound by residues H84 and H98. Residues H183 and H197 each contribute to the heme b site. H202 is a binding site for a ubiquinone. 4 consecutive transmembrane segments (helical) span residues 227–247, 289–309, 321–341, and 348–368; these read IKDL…ALFA, LGGV…PLLH, LSQM…WVGS, and FIII…VLFP.

The protein belongs to the cytochrome b family. As to quaternary structure, the cytochrome bc1 complex contains 11 subunits: 3 respiratory subunits (MT-CYB, CYC1 and UQCRFS1), 2 core proteins (UQCRC1 and UQCRC2) and 6 low-molecular weight proteins (UQCRH/QCR6, UQCRB/QCR7, UQCRQ/QCR8, UQCR10/QCR9, UQCR11/QCR10 and a cleavage product of UQCRFS1). This cytochrome bc1 complex then forms a dimer. Heme b is required as a cofactor.

It is found in the mitochondrion inner membrane. Component of the ubiquinol-cytochrome c reductase complex (complex III or cytochrome b-c1 complex) that is part of the mitochondrial respiratory chain. The b-c1 complex mediates electron transfer from ubiquinol to cytochrome c. Contributes to the generation of a proton gradient across the mitochondrial membrane that is then used for ATP synthesis. The chain is Cytochrome b (MT-CYB) from Aphelocoma coerulescens (Florida scrub-jay).